A 377-amino-acid chain; its full sequence is MAARFIQKILNQLGLIAARDAPAVTATPAVSQVNATPAASRSYSSGTKKVTLIPGDGIGPEISAAVQKIFTAANVPIEWEAVDVTPVRGPDGKFGIPQAAIDSVNTNKIGLKGPLMTPVGKGHRSLNLALRKEFNLYANVRPCRSLEGYKTLYDDVDVVTIRENTEGEYSGIEHEIVDGVVQSIKLITEEASKRVAEYAFQYAKNNNRKKVTVVHKANIMRMSDGLFLRCVRDMAQKFPEIQFEEKYLDTVCLNMVQNPGKYDVLVMPNLYGDILSDMCAGLVGGLGLTPSGNMGLNGALFESVHGTAPDIAGKDLANPTALLLSAVMMLRHMELNTYADKIERAAFETIKEGKYLTGDLGGRAKCSEFTNEICAKL.

Substrate contacts are provided by Arg-131, Arg-141, Arg-162, and Asp-249. The Mg(2+) site is built by Asp-249, Asp-273, and Asp-277.

Belongs to the isocitrate and isopropylmalate dehydrogenases family. In terms of assembly, heterooligomer of subunits alpha, beta, and gamma in the apparent ratio of 2:1:1. Mg(2+) is required as a cofactor. Mn(2+) serves as cofactor.

The protein resides in the mitochondrion. It catalyses the reaction D-threo-isocitrate + NAD(+) = 2-oxoglutarate + CO2 + NADH. Probable catalytic subunit of the enzyme which catalyzes the decarboxylation of isocitrate (ICT) into alpha-ketoglutarate. The polypeptide is Probable isocitrate dehydrogenase [NAD] subunit alpha, mitochondrial (Drosophila melanogaster (Fruit fly)).